The chain runs to 115 residues: Large ribosomal subunit protein uL22 (115 aa).

This sequence belongs to the universal ribosomal protein uL22 family. As to quaternary structure, part of the 50S ribosomal subunit.

This protein binds specifically to 23S rRNA; its binding is stimulated by other ribosomal proteins, e.g. L4, L17, and L20. It is important during the early stages of 50S assembly. It makes multiple contacts with different domains of the 23S rRNA in the assembled 50S subunit and ribosome. Its function is as follows. The globular domain of the protein is located near the polypeptide exit tunnel on the outside of the subunit, while an extended beta-hairpin is found that lines the wall of the exit tunnel in the center of the 70S ribosome. This Coxiella burnetii (strain CbuG_Q212) (Coxiella burnetii (strain Q212)) protein is Large ribosomal subunit protein uL22.